Consider the following 308-residue polypeptide: Glycine-rich protein GRP33 (308 aa).

Positions Asp83–Arg118 constitute a KH domain. Composition is skewed to gly residues over residues Gly203 to Ser220 and Arg273 to Lys294. Disordered regions lie at residues Gly203–Pro222 and Ser270–Tyr308.

The arginines in the Gly-rich domain might be methylated.

The protein is Glycine-rich protein GRP33 of Artemia salina (Brine shrimp).